A 758-amino-acid chain; its full sequence is Calpain (758 aa).

Residues Leu99–Gly397 form the Calpain catalytic domain. Active-site residues include Cys154, His313, and Asn337. The tract at residues Leu398 to Glu562 is domain III. Positions Asp563–Thr582 are linker. The tract at residues Leu583 to Tyr757 is domain IV. Asp641, Asn643, Thr645, His647, Glu652, Asp671, Asp673, Ser675, Tyr677, and Glu682 together coordinate Ca(2+). EF-hand domains follow at residues Ile658–His693 and Val694–Ala729.

Belongs to the peptidase C2 family.

Activated by free cytoplasmic calcium. Calpains are calcium-activated non-lysosomal thiol-proteases. The chain is Calpain from Schistosoma mansoni (Blood fluke).